We begin with the raw amino-acid sequence, 142 residues long: Hemoglobin subunit alpha (142 aa).

The Globin domain occupies 2 to 142; it reads VLSAADKGNV…VSTVLTSKYR (141 aa). A Phosphoserine modification is found at S4. 2 positions are modified to N6-succinyllysine: K8 and K12. The residue at position 17 (K17) is an N6-acetyllysine; alternate. The residue at position 17 (K17) is an N6-succinyllysine; alternate. A Phosphotyrosine modification is found at Y25. S36 is subject to Phosphoserine. Residue K41 is modified to N6-succinyllysine. S50 is subject to Phosphoserine. H59 is a binding site for O2. Residue H88 participates in heme b binding. A Phosphoserine modification is found at S103. Residue T109 is modified to Phosphothreonine. Phosphoserine is present on S125. Phosphothreonine occurs at positions 135 and 138. S139 bears the Phosphoserine mark.

This sequence belongs to the globin family. In terms of assembly, heterotetramer of two alpha chains and two beta chains. In terms of tissue distribution, red blood cells.

Functionally, involved in oxygen transport from the lung to the various peripheral tissues. Its function is as follows. Hemopressin acts as an antagonist peptide of the cannabinoid receptor CNR1. Hemopressin-binding efficiently blocks cannabinoid receptor CNR1 and subsequent signaling. This chain is Hemoglobin subunit alpha (HBA), found in Bos taurus (Bovine).